We begin with the raw amino-acid sequence, 267 residues long: Sorbitol-6-phosphate 2-dehydrogenase (267 aa).

Residue 9-38 (DNVIIVTGGASGIGLAIVDELLSQGAHVQM) coordinates NAD(+). Ser147 contributes to the substrate binding site. Residue Tyr160 is the Proton acceptor of the active site.

It belongs to the short-chain dehydrogenases/reductases (SDR) family. In terms of assembly, homotetramer.

The catalysed reaction is D-sorbitol 6-phosphate + NAD(+) = beta-D-fructose 6-phosphate + NADH + H(+). The protein operates within carbohydrate metabolism; D-sorbitol degradation; D-fructose 6-phosphate from D-sorbitol 6-phosphate: step 1/1. The sequence is that of Sorbitol-6-phosphate 2-dehydrogenase (sorD) from Klebsiella pneumoniae.